Here is a 395-residue protein sequence, read N- to C-terminus: Na(+)/H(+) antiporter NhaA (395 aa).

Helical transmembrane passes span 15–35, 66–86, 101–121, 132–152, 161–181, 184–204, 219–239, 265–285, 301–321, 339–359, and 366–386; these read FLGS…AGFV, IDAW…ILEI, VALP…TYLL, GWAI…LALG, AWLM…IAVF, NALY…LIGA, CILL…AGVI, ALTP…NVGV, LGIM…ATLL, VFGL…IANL, and LVIP…LAGW.

It belongs to the NhaA Na(+)/H(+) (TC 2.A.33) antiporter family.

The protein resides in the cell inner membrane. The catalysed reaction is Na(+)(in) + 2 H(+)(out) = Na(+)(out) + 2 H(+)(in). In terms of biological role, na(+)/H(+) antiporter that extrudes sodium in exchange for external protons. This Gluconacetobacter diazotrophicus (strain ATCC 49037 / DSM 5601 / CCUG 37298 / CIP 103539 / LMG 7603 / PAl5) protein is Na(+)/H(+) antiporter NhaA.